A 375-amino-acid polypeptide reads, in one-letter code: ATP-sensitive inward rectifier potassium channel 15 (375 aa).

The Cytoplasmic portion of the chain corresponds to 1–60; it reads MDAIHIGMSSTPLVKHTAGAGLKANRPRVMSKSGHSNVRIDKVDGIYLLYLQDLWTTVID. The helical transmembrane segment at 61–87 threads the bilayer; that stretch reads MKWRYKLTLFAATFVMTWFLFGVIYYA. Residues 88–113 are Extracellular-facing; that stretch reads IAFIHGDLEPGEPISNHTPCIMKVDS. Positions 114–130 form an intramembrane region, helical; Pore-forming; it reads LTGAFLFSLESQTTIGY. The Selectivity filter motif lies at 127–132; it reads TIGYGV. The Extracellular portion of the chain corresponds to 131–139; sequence GVRSITEEC. Residues 140-165 form a helical membrane-spanning segment; the sequence is PHAIFLLVAQLVITTLIEIFITGTFL. The Cytoplasmic segment spans residues 166 to 375; the sequence is AKIARPKKRA…RTLLLQQSNV (210 aa).

It belongs to the inward rectifier-type potassium channel (TC 1.A.2.1) family. KCNJ15 subfamily. In terms of assembly, can form heteromultimeric channels with Kir5.1/KCNJ16. Interacts with PATJ.

The protein localises to the membrane. The protein resides in the cell membrane. The catalysed reaction is K(+)(in) = K(+)(out). With respect to regulation, channel activity is regulated by variations of cytosolic pH; reversibly inhibited by acidic pH values. Inhibited by Ba(2+) and Cs(+) in a voltage-dependent manner. Functionally, inward rectifier potassium channels are characterized by a greater tendency to allow potassium to flow into the cell rather than out of it. Their voltage dependence is regulated by the concentration of extracellular potassium; as external potassium is raised, the voltage range of the channel opening shifts to more positive voltages. The inward rectification is mainly due to the blockage of outward current by internal magnesium. This Homo sapiens (Human) protein is ATP-sensitive inward rectifier potassium channel 15 (KCNJ15).